Consider the following 227-residue polypeptide: Cytochrome c oxidase subunit 2 (227 aa).

The Mitochondrial intermembrane portion of the chain corresponds to 1-14; sequence MAHPLQLGLQDASS. A helical transmembrane segment spans residues 15–45; the sequence is PIMEELLYFHDHALMIVFLISSLVLYTISLM. Topologically, residues 46–59 are mitochondrial matrix; it reads LTTKLMHTSTMNAQ. Residues 60–87 traverse the membrane as a helical segment; sequence MVETMWTILPAVILTSIALPSLRILYMT. Residues 88-227 are Mitochondrial intermembrane-facing; sequence DEINNPLLTI…HFETWSTLTS (140 aa). Cu cation-binding residues include His-161, Cys-196, Glu-198, Cys-200, His-204, and Met-207. Glu-198 is a Mg(2+) binding site.

The protein belongs to the cytochrome c oxidase subunit 2 family. Component of the cytochrome c oxidase (complex IV, CIV), a multisubunit enzyme composed of 14 subunits. The complex is composed of a catalytic core of 3 subunits MT-CO1, MT-CO2 and MT-CO3, encoded in the mitochondrial DNA, and 11 supernumerary subunits COX4I, COX5A, COX5B, COX6A, COX6B, COX6C, COX7A, COX7B, COX7C, COX8 and NDUFA4, which are encoded in the nuclear genome. The complex exists as a monomer or a dimer and forms supercomplexes (SCs) in the inner mitochondrial membrane with NADH-ubiquinone oxidoreductase (complex I, CI) and ubiquinol-cytochrome c oxidoreductase (cytochrome b-c1 complex, complex III, CIII), resulting in different assemblies (supercomplex SCI(1)III(2)IV(1) and megacomplex MCI(2)III(2)IV(2)). Found in a complex with TMEM177, COA6, COX18, COX20, SCO1 and SCO2. Interacts with TMEM177 in a COX20-dependent manner. Interacts with COX20. Interacts with COX16. Cu cation serves as cofactor.

It is found in the mitochondrion inner membrane. The catalysed reaction is 4 Fe(II)-[cytochrome c] + O2 + 8 H(+)(in) = 4 Fe(III)-[cytochrome c] + 2 H2O + 4 H(+)(out). Functionally, component of the cytochrome c oxidase, the last enzyme in the mitochondrial electron transport chain which drives oxidative phosphorylation. The respiratory chain contains 3 multisubunit complexes succinate dehydrogenase (complex II, CII), ubiquinol-cytochrome c oxidoreductase (cytochrome b-c1 complex, complex III, CIII) and cytochrome c oxidase (complex IV, CIV), that cooperate to transfer electrons derived from NADH and succinate to molecular oxygen, creating an electrochemical gradient over the inner membrane that drives transmembrane transport and the ATP synthase. Cytochrome c oxidase is the component of the respiratory chain that catalyzes the reduction of oxygen to water. Electrons originating from reduced cytochrome c in the intermembrane space (IMS) are transferred via the dinuclear copper A center (CU(A)) of subunit 2 and heme A of subunit 1 to the active site in subunit 1, a binuclear center (BNC) formed by heme A3 and copper B (CU(B)). The BNC reduces molecular oxygen to 2 water molecules using 4 electrons from cytochrome c in the IMS and 4 protons from the mitochondrial matrix. This chain is Cytochrome c oxidase subunit 2 (MT-CO2), found in Galeopterus variegatus (Malayan flying lemur).